Consider the following 288-residue polypeptide: MAPKKRSSRGTRTNTLRSRKLASFLKDFDREVQVRTKQIESDRQTLLKEVENLYNIEVLRLPKALQVMKWLDYFALGGNRQALEEAATADRDITEINNLTAEAIQTPLKSVKKRKVIEVDEAIKEEEEDEEEEGGGGGGRKSHKNLRSARVKRCPPSKKRTQSIQGRSRSKRLSHDFVTPAMSRLEPSLVKPTPGMTPRFDSRVFKTPGLRTPAAKEQVYNISINGSPLADSKEISLSVPIGGGASLRLLASDLQRVDIAQLNPEALGNIKKLSSRLAQICSSIRTGR.

A required for interaction with INCENP region spans residues 1–58 (MAPKKRSSRGTRTNTLRSRKLASFLKDFDREVQVRTKQIESDRQTLLKEVENLYNIEV). The segment at 1–88 (MAPKKRSSRG…NRQALEEAAT (88 aa)) is required for centromere localization. The segment at 1–149 (MAPKKRSSRG…RKSHKNLRSA (149 aa)) is required for interaction with SENP3. Residues 10–109 (GTRTNTLRSR…TAEAIQTPLK (100 aa)) form a required to form a minimal CPC core complex that localizes to the central spindle and midbody and properly executes the role of the CPC during cytokinesis region. The segment at 20–78 (KLASFLKDFDREVQVRTKQIESDRQTLLKEVENLYNIEVLRLPKALQVMKWLDYFALGG) is required for interaction with INCENP and BIRC5. Thr-88 is modified (phosphothreonine; by TTK). Citrulline is present on Arg-91. A Phosphothreonine; by TTK modification is found at Thr-94. Phosphothreonine is present on Thr-106. Ser-110 is subject to Phosphoserine. Acidic residues predominate over residues 124–134 (KEEEEDEEEEG). The tract at residues 124 to 173 (KEEEEDEEEEGGGGGGRKSHKNLRSARVKRCPPSKKRTQSIQGRSRSKRL) is disordered. Basic residues predominate over residues 140-161 (RKSHKNLRSARVKRCPPSKKRT). Lys-144 participates in a covalent cross-link: Glycyl lysine isopeptide (Lys-Gly) (interchain with G-Cter in SUMO2). Residue Ser-174 is modified to Phosphoserine; by AURKB. A phosphothreonine mark is found at Thr-197 and Thr-212. 4 positions are modified to phosphoserine: Ser-227, Ser-232, Ser-246, and Ser-252.

It belongs to the borealin family. As to quaternary structure, may form homooligomers and homodimers. Component of the chromosomal passenger complex (CPC) composed of at least BIRC5/survivin, CDCA8/borealin, INCENP, AURKB or AURKC; in the complex forms a triple-helix bundle-based subcomplex with INCENP and BIRC5. Interacts with SENP3, UBE2I and RANBP2. Interacts (phosphorylated) with SGO1 and SGO2; the association is dependent on CDK1. In terms of processing, phosphorylated by TTK, essentially at Thr-88 and Thr-94. Phosphorylation (probably by CDK1) promotes targeting of the CPC to centromeric DNA. Sumoylated by UBE2I and RANBP2. Desumoylated by SENP3 through the removal of SUMO2 and SUMO3. Post-translationally, citrullinated by PADI4.

Its subcellular location is the nucleus. The protein resides in the nucleolus. The protein localises to the cytoplasm. It is found in the chromosome. It localises to the centromere. Its subcellular location is the cytoskeleton. The protein resides in the spindle. Functionally, component of the chromosomal passenger complex (CPC), a complex that acts as a key regulator of mitosis. The CPC complex has essential functions at the centromere in ensuring correct chromosome alignment and segregation and is required for chromatin-induced microtubule stabilization and spindle assembly. In the complex, it may be required to direct the CPC to centromeric DNA. In Rattus norvegicus (Rat), this protein is Borealin (Cdca8).